The sequence spans 607 residues: Autophagy-related protein 16-1 (607 aa).

Residues 13 to 43 (WKRHISEQLRRRDRLQRQAFEEIILQYNKLL) are interaction with ATG5. Positions 78–230 (NDNQLQEMAQ…QKELAEAAKE (153 aa)) form a coiled coil. S139 carries the phosphoserine; by CK2 modification. The WIPI2-binding stretch occupies residues 207–230 (AENEKDSRRRQARLQKELAEAAKE). Positions 230–242 (EPLPVEQDDDIEV) are RB1CC1-binding. 2 positions are modified to phosphoserine: S269 and S287. The Caspase cleavage motif lies at 296–299 (DNVD). 7 WD repeats span residues 320 to 359 (AHDG…CEFK), 364 to 403 (GSNA…LRHT), 406 to 445 (GHSG…CIKT), 447 to 484 (FAGS…IVRE), 486 to 525 (ELLG…IKQT), 532 to 573 (KCGS…KVLS), and 575 to 607 (QHSS…WAQY).

This sequence belongs to the WD repeat ATG16 family. In terms of assembly, homodimer. Homooligomer. Heterooligomer with ATG16L2. Interacts with WIPI1. Interacts with WIPI2. Interacts with RB1CC1; the interaction is required for ULK1 complex-dependent autophagy. Interacts with ATG5. Part of the minor complex composed of 4 sets of ATG12-ATG5 and ATG16L1 (400 kDa); this complex interacts with ATG3 leading to disruption of ATG7 interaction and promotion of ATG8-like proteins lipidation. Part of the major complex composed of 8 sets of ATG12-ATG5 and ATG16L1 (800 kDa). Interacts with RAB33B (GTP- and GDP-bound forms); the complex consists of a tetramer where two RAB33B molecules bind independently one molecule of the ATG16L1 homodimer; the interaction promotes ATG12-ATG5-ATG16L1 complex recruitment to phagophores. Interacts (via WD repeats) with TMEM59; the interaction mediates unconventional autophagic activity of TMEM59. Interacts with TLR2. Interacts (via WD repeats) with MEFV. Interacts with PPP1CA; the interaction dephosphorylates ATG16L1 causing dissociation of ATG12-ATG5-ATG16L1 complex. Interacts (via N-terminal) with CLTC. Interacts with NOD1. Interacts with NOD2. Interacts with TUFM. Interacts with TRIM16. Interacts (via WD repeats) with SPATA33. Interacts with IRGM. Post-translationally, proteolytic cleavage by activated CASP3 leads to degradation and may regulate autophagy upon cellular stress and apoptotic stimuli. In terms of processing, phosphorylation at Ser-139 promotes association with the ATG12-ATG5 conjugate to form the ATG12-ATG5-ATG16L1 complex.

The protein resides in the cytoplasm. Its subcellular location is the preautophagosomal structure membrane. It localises to the endosome membrane. The protein localises to the lysosome membrane. Plays an essential role in both canonical and non-canonical autophagy: interacts with ATG12-ATG5 to mediate the lipidation to ATG8 family proteins (MAP1LC3A, MAP1LC3B, MAP1LC3C, GABARAPL1, GABARAPL2 and GABARAP). Acts as a molecular hub, coordinating autophagy pathways via distinct domains that support either canonical or non-canonical signaling. During canonical autophagy, interacts with ATG12-ATG5 to mediate the conjugation of phosphatidylethanolamine (PE) to ATG8 proteins, to produce a membrane-bound activated form of ATG8. Thereby, controls the elongation of the nascent autophagosomal membrane. As part of the ATG8 conjugation system with ATG5 and ATG12, required for recruitment of LRRK2 to stressed lysosomes and induction of LRRK2 kinase activity in response to lysosomal stress. Also involved in non-canonical autophagy, a parallel pathway involving conjugation of ATG8 proteins to single membranes at endolysosomal compartments, probably by catalyzing conjugation of phosphatidylserine (PS) to ATG8. Non-canonical autophagy plays a key role in epithelial cells to limit lethal infection by influenza A (IAV) virus. Regulates mitochondrial antiviral signaling (MAVS)-dependent type I interferon (IFN-I) production. Negatively regulates NOD1- and NOD2-driven inflammatory cytokine response. Instead, promotes an autophagy-dependent antibacterial pathway together with NOD1 or NOD2. Plays a role in regulating morphology and function of Paneth cell. This Homo sapiens (Human) protein is Autophagy-related protein 16-1.